The sequence spans 334 residues: 6-phosphogluconolactonase (334 aa).

It belongs to the cycloisomerase 2 family.

It carries out the reaction 6-phospho-D-glucono-1,5-lactone + H2O = 6-phospho-D-gluconate + H(+). It functions in the pathway carbohydrate degradation; pentose phosphate pathway; D-ribulose 5-phosphate from D-glucose 6-phosphate (oxidative stage): step 2/3. In terms of biological role, catalyzes the hydrolysis of 6-phosphogluconolactone to 6-phosphogluconate. The protein is 6-phosphogluconolactonase of Buchnera aphidicola subsp. Acyrthosiphon pisum (strain APS) (Acyrthosiphon pisum symbiotic bacterium).